The sequence spans 90 residues: Small ribosomal subunit protein bS6 (90 aa).

Residue K33 forms an Isoglutamyl lysine isopeptide (Lys-Gln) (interchain with Q-Cter in protein Pup) linkage.

It belongs to the bacterial ribosomal protein bS6 family.

Binds together with bS18 to 16S ribosomal RNA. This chain is Small ribosomal subunit protein bS6 (rpsF), found in Mycolicibacterium smegmatis (strain ATCC 700084 / mc(2)155) (Mycobacterium smegmatis).